A 746-amino-acid polypeptide reads, in one-letter code: Chitin biosynthesis protein CHS6 (746 aa).

A disordered region spans residues 1-25; that stretch reads MNLFWPSETKKQNEIPGGDYTPGNS. The CHS5-binding stretch occupies residues 734 to 746; sequence LAWIADLDHTVQP.

It belongs to the CHAPS family. As to quaternary structure, component of the CHS5/6 complex composed of the 4 CHAPS proteins BCH1, BCH2, BUD7, and CHS6 as well as at least CHS5 and GTP-bound ARF1. The complex interacts with the cargo protein CHS3.

Its subcellular location is the golgi apparatus. It localises to the trans-Golgi network membrane. In terms of biological role, member of the CHS5-ARF1P-binding proteins (CHAPS) which mediates export of specific cargo proteins, including chitin synthase CHS3. The polypeptide is Chitin biosynthesis protein CHS6 (CHS6) (Saccharomyces cerevisiae (strain ATCC 204508 / S288c) (Baker's yeast)).